Here is a 646-residue protein sequence, read N- to C-terminus: Long-chain fatty acid transport protein 1 (646 aa).

The Extracellular portion of the chain corresponds to 1 to 13 (MRAPGAGSASVAS). Residues 14–34 (LVLLWLLGLPWTWSTAAALGV) form a helical membrane-spanning segment. At 35–646 (YVGGGGWRFL…TRICSGAFAL (612 aa)) the chain is on the cytoplasmic side. The interval 191 to 475 (EMSGELGKSL…YISESATSKK (285 aa)) is sufficient for oligomerization. 246 to 257 (YIYTSGTTGLPK) is an AMP binding site.

The protein belongs to the ATP-dependent AMP-binding enzyme family. In terms of assembly, self-associates. May function as a homodimer. Interacts with EPRS1; mediates the translocation of SLC27A1 from the cytoplasm to the plasma membrane thereby increasing the uptake of long-chain fatty acids. Interacts with DGAT2 and this interaction is enhanced in the presence of ZFYVE1.

It localises to the cell membrane. It is found in the endomembrane system. The protein localises to the cytoplasm. It carries out the reaction a fatty acid(in) = a fatty acid(out). It catalyses the reaction (9Z)-octadecenoate(out) = (9Z)-octadecenoate(in). The enzyme catalyses hexadecanoate(out) = hexadecanoate(in). The catalysed reaction is (5Z,8Z,11Z,14Z)-eicosatetraenoate(out) = (5Z,8Z,11Z,14Z)-eicosatetraenoate(in). It carries out the reaction (9Z,12Z)-octadecadienoate(out) = (9Z,12Z)-octadecadienoate(in). It catalyses the reaction a long-chain fatty acid + ATP + CoA = a long-chain fatty acyl-CoA + AMP + diphosphate. The enzyme catalyses (5Z,8Z,11Z,14Z)-eicosatetraenoate + ATP + CoA = (5Z,8Z,11Z,14Z)-eicosatetraenoyl-CoA + AMP + diphosphate. The catalysed reaction is a very long-chain fatty acid + ATP + CoA = a very long-chain fatty acyl-CoA + AMP + diphosphate. It carries out the reaction tetracosanoate + ATP + CoA = tetracosanoyl-CoA + AMP + diphosphate. Its activity is regulated as follows. Inhibited by Triacsin C. Functionally, mediates the import of long-chain fatty acids (LCFA) into the cell by facilitating their transport at the plasma membrane. Also functions as an acyl-CoA ligase catalyzing the ATP-dependent formation of fatty acyl-CoA using LCFA and very-long-chain fatty acids (VLCFA) as substrates, which prevents fatty acid efflux from cells and might drive more fatty acid uptake. May act directly as a bona fide transporter, or alternatively, in a cytoplasmic or membrane-associated multimeric protein complex to trap and draw fatty acids towards accumulation. Plays a pivotal role in regulating available LCFA substrates from exogenous sources in tissues undergoing high levels of beta-oxidation or triglyceride synthesis. May be involved in regulation of cholesterol metabolism. Probably involved in fatty acid transport across the blood barrier. The sequence is that of Long-chain fatty acid transport protein 1 from Bos taurus (Bovine).